The following is a 288-amino-acid chain: ATP synthase gamma chain (288 aa).

It belongs to the ATPase gamma chain family. In terms of assembly, F-type ATPases have 2 components, CF(1) - the catalytic core - and CF(0) - the membrane proton channel. CF(1) has five subunits: alpha(3), beta(3), gamma(1), delta(1), epsilon(1). CF(0) has three main subunits: a, b and c.

It is found in the cell inner membrane. Produces ATP from ADP in the presence of a proton gradient across the membrane. The gamma chain is believed to be important in regulating ATPase activity and the flow of protons through the CF(0) complex. This is ATP synthase gamma chain from Legionella pneumophila (strain Paris).